Reading from the N-terminus, the 285-residue chain is Bifunctional protein FolD (285 aa).

Residues 166 to 168 and Ile232 contribute to the NADP(+) site; that span reads GAS.

The protein belongs to the tetrahydrofolate dehydrogenase/cyclohydrolase family. Homodimer.

The enzyme catalyses (6R)-5,10-methylene-5,6,7,8-tetrahydrofolate + NADP(+) = (6R)-5,10-methenyltetrahydrofolate + NADPH. It carries out the reaction (6R)-5,10-methenyltetrahydrofolate + H2O = (6R)-10-formyltetrahydrofolate + H(+). It functions in the pathway one-carbon metabolism; tetrahydrofolate interconversion. Catalyzes the oxidation of 5,10-methylenetetrahydrofolate to 5,10-methenyltetrahydrofolate and then the hydrolysis of 5,10-methenyltetrahydrofolate to 10-formyltetrahydrofolate. This chain is Bifunctional protein FolD, found in Aliivibrio fischeri (strain MJ11) (Vibrio fischeri).